Reading from the N-terminus, the 393-residue chain is Chalcone synthase LF2 (393 aa).

The active site involves C164.

It belongs to the thiolase-like superfamily. Chalcone/stilbene synthases family.

It catalyses the reaction (E)-4-coumaroyl-CoA + 3 malonyl-CoA + 3 H(+) = 2',4,4',6'-tetrahydroxychalcone + 3 CO2 + 4 CoA. It functions in the pathway secondary metabolite biosynthesis; flavonoid biosynthesis. In terms of biological role, the primary product of this enzyme is 4,2',4',6'-tetrahydroxychalcone (also termed naringenin-chalcone or chalcone) which can under specific conditions spontaneously isomerize into naringenin. The protein is Chalcone synthase LF2 (CHS-LF2) of Ipomoea batatas (Sweet potato).